We begin with the raw amino-acid sequence, 504 residues long: MIVLTGHTLTIDEVRRVVYERERVAADEESMRAVEKSRAAVEQAISNGRTIYGVNTGFGKLADVRIEGSDLEQLQINLLRSHACAVGEPFAEDVVRAMLLLRANALLKGYSGVRPAVIEQLLAFLNTGIHPIVPQQGSLGASGDLAPLAHLALAFAGEGEAMYQGRRMPAAQALSQAGISPLSLQEKEGLALINGTQVMTAVGALAYLEAEQLAYDSEWIAALTIEALYGIVDAFDARIHAARGFQEQVEVAERLRRYLAGSQLTTRQGERRVQDAYSIRCLPQVHGASLRALRYVKETLEIEMNAATDNPLIFADGTALSGGNFHGQPVAIAMDLLKIAVAELANISERRIERLVNPQLSEGLPPFLSPQPGLQSGAMIMQYVAASLVSENKTLAHPASVDSIPSSANQEDHVSMGTTAARHAYMIVQNARKVLAIELICALQAVEARGIERMAPSTRQFYHKARRIVSSITADRVFSDDIEAVAAWLSERANHHFLRDEAKA.

A cross-link (5-imidazolinone (Ala-Gly)) is located at residues 141–143; the sequence is ASG. Residue Ser142 is modified to 2,3-didehydroalanine (Ser).

The protein belongs to the PAL/histidase family. In terms of processing, contains an active site 4-methylidene-imidazol-5-one (MIO), which is formed autocatalytically by cyclization and dehydration of residues Ala-Ser-Gly.

It localises to the cytoplasm. It catalyses the reaction L-histidine = trans-urocanate + NH4(+). The protein operates within amino-acid degradation; L-histidine degradation into L-glutamate; N-formimidoyl-L-glutamate from L-histidine: step 1/3. The protein is Histidine ammonia-lyase of Geobacillus kaustophilus (strain HTA426).